The sequence spans 182 residues: Cytidylate kinase (182 aa).

Residue 7-15 (GPPGSGKSS) coordinates ATP.

Belongs to the cytidylate kinase family. Type 2 subfamily.

It localises to the cytoplasm. The enzyme catalyses CMP + ATP = CDP + ADP. The catalysed reaction is dCMP + ATP = dCDP + ADP. The polypeptide is Cytidylate kinase (cmk) (Sulfolobus acidocaldarius (strain ATCC 33909 / DSM 639 / JCM 8929 / NBRC 15157 / NCIMB 11770)).